A 229-amino-acid chain; its full sequence is Pyridoxal phosphate homeostasis protein (229 aa).

K36 bears the N6-(pyridoxal phosphate)lysine mark.

This sequence belongs to the pyridoxal phosphate-binding protein YggS/PROSC family. Monomer.

Functionally, pyridoxal 5'-phosphate (PLP)-binding protein, which is involved in PLP homeostasis. The protein is Pyridoxal phosphate homeostasis protein of Buchnera aphidicola subsp. Schizaphis graminum (strain Sg).